We begin with the raw amino-acid sequence, 336 residues long: tRNA-cytidine(32) 2-sulfurtransferase (336 aa).

Residues 11-23 (TAAAPAGTGEATP) are compositionally biased toward low complexity. A disordered region spans residues 11 to 31 (TAAAPAGTGEATPVHARARSP). Residues 75–80 (SGGKDS) carry the PP-loop motif motif. Residues Cys-150, Cys-153, and Cys-241 each contribute to the [4Fe-4S] cluster site.

Belongs to the TtcA family. In terms of assembly, homodimer. The cofactor is Mg(2+). It depends on [4Fe-4S] cluster as a cofactor.

It is found in the cytoplasm. It carries out the reaction cytidine(32) in tRNA + S-sulfanyl-L-cysteinyl-[cysteine desulfurase] + AH2 + ATP = 2-thiocytidine(32) in tRNA + L-cysteinyl-[cysteine desulfurase] + A + AMP + diphosphate + H(+). Its pathway is tRNA modification. In terms of biological role, catalyzes the ATP-dependent 2-thiolation of cytidine in position 32 of tRNA, to form 2-thiocytidine (s(2)C32). The sulfur atoms are provided by the cysteine/cysteine desulfurase (IscS) system. The sequence is that of tRNA-cytidine(32) 2-sulfurtransferase from Paraburkholderia xenovorans (strain LB400).